Consider the following 375-residue polypeptide: Queuine tRNA-ribosyltransferase (375 aa).

D94 (proton acceptor) is an active-site residue. Residues 94–98 (DSGGF), D148, Q191, and G218 contribute to the substrate site. The interval 249–255 (GVGSPDD) is RNA binding. D268 acts as the Nucleophile in catalysis. Residues 273–277 (TRIAR) form an RNA binding; important for wobble base 34 recognition region. Zn(2+)-binding residues include C306, C308, C311, and H337.

It belongs to the queuine tRNA-ribosyltransferase family. Homodimer. Within each dimer, one monomer is responsible for RNA recognition and catalysis, while the other monomer binds to the replacement base PreQ1. Zn(2+) serves as cofactor.

It catalyses the reaction 7-aminomethyl-7-carbaguanine + guanosine(34) in tRNA = 7-aminomethyl-7-carbaguanosine(34) in tRNA + guanine. It functions in the pathway tRNA modification; tRNA-queuosine biosynthesis. Its function is as follows. Catalyzes the base-exchange of a guanine (G) residue with the queuine precursor 7-aminomethyl-7-deazaguanine (PreQ1) at position 34 (anticodon wobble position) in tRNAs with GU(N) anticodons (tRNA-Asp, -Asn, -His and -Tyr). Catalysis occurs through a double-displacement mechanism. The nucleophile active site attacks the C1' of nucleotide 34 to detach the guanine base from the RNA, forming a covalent enzyme-RNA intermediate. The proton acceptor active site deprotonates the incoming PreQ1, allowing a nucleophilic attack on the C1' of the ribose to form the product. After dissociation, two additional enzymatic reactions on the tRNA convert PreQ1 to queuine (Q), resulting in the hypermodified nucleoside queuosine (7-(((4,5-cis-dihydroxy-2-cyclopenten-1-yl)amino)methyl)-7-deazaguanosine). The sequence is that of Queuine tRNA-ribosyltransferase from Thermoanaerobacter sp. (strain X514).